Here is a 317-residue protein sequence, read N- to C-terminus: Urease accessory protein 6 (317 aa).

It belongs to the UreF family. In terms of assembly, URE4, URE6 and URE7 may form a complex that acts as a GTP-hydrolysis-dependent molecular chaperone, activating the urease apoprotein URE1.

In terms of biological role, urease accessory protein required for the maturation and activation of urease via the functional incorporation of the urease nickel metallocenter. Plays a role in host brain invasion. The protein is Urease accessory protein 6 of Cryptococcus neoformans var. grubii serotype A (strain H99 / ATCC 208821 / CBS 10515 / FGSC 9487) (Filobasidiella neoformans var. grubii).